The primary structure comprises 241 residues: tRNA (cytidine/uridine-2'-O-)-methyltransferase TrmJ (241 aa).

S-adenosyl-L-methionine-binding positions include 79–81 (TSA), G114, I134, and 141–143 (GSL).

The protein belongs to the class IV-like SAM-binding methyltransferase superfamily. RNA methyltransferase TrmH family. As to quaternary structure, homodimer.

The protein resides in the cytoplasm. It catalyses the reaction cytidine(32) in tRNA + S-adenosyl-L-methionine = 2'-O-methylcytidine(32) in tRNA + S-adenosyl-L-homocysteine + H(+). It carries out the reaction uridine(32) in tRNA + S-adenosyl-L-methionine = 2'-O-methyluridine(32) in tRNA + S-adenosyl-L-homocysteine + H(+). Its function is as follows. Catalyzes the formation of 2'O-methylated cytidine (Cm32) or 2'O-methylated uridine (Um32) at position 32 in tRNA. The protein is tRNA (cytidine/uridine-2'-O-)-methyltransferase TrmJ (trmJ) of Photorhabdus laumondii subsp. laumondii (strain DSM 15139 / CIP 105565 / TT01) (Photorhabdus luminescens subsp. laumondii).